The following is a 115-amino-acid chain: Xenovulene A biosynthesis cluster protein asL2 (115 aa).

Its function is as follows. Part of the gene cluster that mediates the biosynthesis of xenovulene A, an unusual meroterpenoid that has potent inhibitory effects on the human gamma-aminobutyrate A (GABAA) benzodiazepine receptor. The first step of xenovulene A biosynthesis is the biosynthesis of 3-methylorcinaldehyde performed by the non-reducing polyketide synthase aspks1. The salicylate hydroxylase asL1 then catalyzes the oxidative dearomatization of 3-methylorcinaldehyde to yield a dearomatized hydroxycyclohexadione. The 2-oxoglutarate-dependent dioxygenase asL3 further catalyzes the oxidative ring expansion to provide the first tropolone metabolite. The cytochrome P450 monooxygenase asR2 allows the synthesis of tropolone hemiacetal. In parallel, a previously unrecognised class of terpene cyclase, asR6, produces alpha-humulene from farnesylpyrophosphate (FPP). The putative Diels-Alderase asR5 probably catalyzes the formation of the tropolone-humulene skeleton by linking humulene and the polyketide moiety. Oxidative-ring contractions catalyzed by asL4 and asL6 then processively remove carbon atoms from the polyketide to yield xenovulene A. This chain is Xenovulene A biosynthesis cluster protein asL2, found in Sarocladium schorii (Acremonium strictum (strain IMI 501407)).